The following is a 1093-amino-acid chain: Electroneutral sodium bicarbonate exchanger 1 (1093 aa).

Disordered regions lie at residues 1–25 (MPAAGSNEPDGVLSYQRPDEEAVVD) and 55–95 (PLGR…HDTP). The Extracellular portion of the chain corresponds to 1-478 (MPAAGSNEPD…DYRDALSLQC (478 aa)). Residues 59-77 (QSHRHHRTHGQKHRRRGRG) are compositionally biased toward basic residues. Positions 167 and 169 each coordinate Zn(2+). The VTVLP; mediates dimerization signature appears at 340–344 (LFILL). A helical transmembrane segment spans residues 479-499 (LASFLFLYCACMSPVITFGGL). Over 500 to 523 (LGEATEGRISAIESLFGASMTGIA) the chain is Cytoplasmic. A helical membrane pass occupies residues 524-544 (YSLFAGQALTILGSTGPVLVF). Topologically, residues 545–565 (EKILFKFCKDYALSYLSLRAC) are extracellular. The helical transmembrane segment at 566–586 (IGLWTAFLCIVLVATDASSLV) threads the bilayer. The Cytoplasmic segment spans residues 587 to 595 (CYITRFTEE). The helical transmembrane segment at 596 to 616 (AFASLICIIFIYEAIEKLIHL) threads the bilayer. The Extracellular portion of the chain corresponds to 617–687 (AETYPIHMHS…EFMGSACGHH (71 aa)). Cystine bridges form between Cys-636–Cys-684 and Cys-638–Cys-672. Residue Asn-646 is glycosylated (N-linked (GlcNAc) asparagine). Residues 688–708 (GPYTPDVLFWSCILFFTTFIL) form a helical membrane-spanning segment. Residues 709–731 (SSTLKTFKTSRYFPTRVRSMVSD) are Cytoplasmic-facing. A helical membrane pass occupies residues 732–752 (FAVFLTIFTMVIIDFLIGVPS). The Extracellular segment spans residues 753–778 (PKLQVPSVFKPTRDDRGWIINPIGPN). A helical transmembrane segment spans residues 779–799 (PWWTVIAAIIPALLCTILIFM). The Cytoplasmic segment spans residues 800–824 (DQQITAVIINRKEHKLKKGCGYHLD). The chain crosses the membrane as a helical span at residues 825–845 (LLMVAIMLGVCSIMGLPWFVA). Over 846–881 (ATVLSITHVNSLKLESECSAPGEQPKFLGIREQRVT) the chain is Extracellular. The chain crosses the membrane as a helical span at residues 882–902 (GLMIFVLMGCSVFMTAILKFI). Over 903 to 904 (PM) the chain is Cytoplasmic. Residues 905–925 (PVLYGVFLYMGVSSLQGIQFF) traverse the membrane as a helical segment. At 926 to 962 (DRLKLFGMPAKHQPDFIYLRHVPLRKVHLFTLIQLTC) the chain is on the extracellular side. A helical membrane pass occupies residues 963-983 (LVLLWVIKASPAAIVFPMMVL). The Cytoplasmic segment spans residues 984-1093 (ALVFVRKVMD…GNAKEKSLFN (110 aa)). The stretch at 1010 to 1036 (ESKKKKLDDAKKKAKEEEEAEKMLEIG) forms a coiled coil.

The protein belongs to the anion exchanger (TC 2.A.31) family. Homodimer. Expressed in the pyramidal cells of the hippocampus (at protein level). Highly expressed in all major regions of the brain, spinal column and in testis, and moderate levels in trachea, thyroid and medulla region of kidney. Low expression levels observed in pancreas and kidney cortex. In terms of tissue distribution, expressed in the brain. As to expression, expressed in the brain, heart and kidney.

Its subcellular location is the apical cell membrane. The protein resides in the basolateral cell membrane. It is found in the cytoplasmic vesicle. The protein localises to the secretory vesicle. It localises to the synaptic vesicle membrane. Its subcellular location is the cell membrane. It carries out the reaction 2 hydrogencarbonate(out) + chloride(in) + Na(+)(out) = 2 hydrogencarbonate(in) + chloride(out) + Na(+)(in). With respect to regulation, activity is inhibited by 4,4'-Di-isothiocyanatostilbene-2,2'-disulfonic acid (DIDS - an inhibitor of several anion channels and transporters). Activity is inhibited by 4,4'-Di-isothiocyanatostilbene-2,2'-disulfonic acid (DIDS - an inhibitor of several anion channels and transporters). Zinc-binding negatively regulates its activity. Its function is as follows. Mediates electroneutral sodium- and carbonate-dependent chloride-HCO3(-) exchange with a Na(+):HCO3(-) stoichiometry of 2:1. Plays a major role in pH regulation in neurons. Mediates sodium reabsorption in the renal cortical collecting ducts. The chain is Electroneutral sodium bicarbonate exchanger 1 from Homo sapiens (Human).